Reading from the N-terminus, the 248-residue chain is 2,3-bisphosphoglycerate-dependent phosphoglycerate mutase (248 aa).

Substrate contacts are provided by residues 8–15, 21–22, Arg-60, 87–90, Lys-98, 114–115, and 183–184; these read RHGESVWN, TG, ERHY, RR, and GN. Residue His-9 is the Tele-phosphohistidine intermediate of the active site. Residue Glu-87 is the Proton donor/acceptor of the active site.

This sequence belongs to the phosphoglycerate mutase family. BPG-dependent PGAM subfamily.

The enzyme catalyses (2R)-2-phosphoglycerate = (2R)-3-phosphoglycerate. Its pathway is carbohydrate degradation; glycolysis; pyruvate from D-glyceraldehyde 3-phosphate: step 3/5. Its function is as follows. Catalyzes the interconversion of 2-phosphoglycerate and 3-phosphoglycerate. The protein is 2,3-bisphosphoglycerate-dependent phosphoglycerate mutase of Brachyspira hyodysenteriae (strain ATCC 49526 / WA1).